We begin with the raw amino-acid sequence, 159 residues long: Nascent polypeptide-associated complex subunit beta (159 aa).

Disordered regions lie at residues 1 to 39 (MDME…GMDD) and 124 to 159 (QSMQ…DKVE). The segment covering 23 to 32 (TPRRKVKNVH) has biased composition (basic residues). One can recognise an NAC-A/B domain in the interval 36–101 (GMDDKKLQTS…GEDKELTELV (66 aa)). Acidic residues predominate over residues 136–153 (KDDEEDDDDIPDLVEGEN).

The protein belongs to the NAC-beta family. In terms of assembly, part of the nascent polypeptide-associated complex (NAC), consisting of EGD2 and EGD1. NAC associates with ribosomes via EGD1.

The protein resides in the cytoplasm. The protein localises to the nucleus. In terms of biological role, component of the nascent polypeptide-associated complex (NAC), a dynamic component of the ribosomal exit tunnel, protecting the emerging polypeptides from interaction with other cytoplasmic proteins to ensure appropriate nascent protein targeting. The NAC complex also promotes mitochondrial protein import by enhancing productive ribosome interactions with the outer mitochondrial membrane and blocks the inappropriate interaction of ribosomes translating non-secretory nascent polypeptides with translocation sites in the membrane of the endoplasmic reticulum. EGD1 may act as a transcription factor that exert a negative effect on the expression of several genes that are transcribed by RNA polymerase II. The polypeptide is Nascent polypeptide-associated complex subunit beta (egd1) (Sclerotinia sclerotiorum (strain ATCC 18683 / 1980 / Ss-1) (White mold)).